The chain runs to 389 residues: Shewanella-like protein phosphatase 1 (389 aa).

The transit peptide at 1 to 53 (MASLYLNSLLPLPPSHPQKLLEPSSSSLLSTSNGNELALKPIVINGDPPTFVS) directs the protein to the chloroplast. The Mn(2+) site is built by aspartate 64, histidine 66, aspartate 102, and asparagine 137. Histidine 138 functions as the Proton donor in the catalytic mechanism. Residues histidine 242 and histidine 314 each contribute to the Mn(2+) site.

The protein belongs to the metallophosphoesterase superfamily. SLP family. Mn(2+) is required as a cofactor. As to expression, expressed in rosettes leaves, shoots and flowers (at protein level).

Its subcellular location is the plastid. It localises to the chloroplast. Its function is as follows. Shows phosphatase activity, hydrolyzing the artificial substrate para-nitrophenylphosphate (pNPP) in vitro. The polypeptide is Shewanella-like protein phosphatase 1 (Arabidopsis thaliana (Mouse-ear cress)).